The sequence spans 1340 residues: Early transcription factor large subunit homolog (1340 aa).

Its subcellular location is the virion. Functionally, putative initation factor. This chain is Early transcription factor large subunit homolog, found in Ornithodoros (relapsing fever ticks).